The primary structure comprises 149 residues: Large ribosomal subunit protein uL13 (149 aa).

This sequence belongs to the universal ribosomal protein uL13 family. In terms of assembly, part of the 50S ribosomal subunit.

This protein is one of the early assembly proteins of the 50S ribosomal subunit, although it is not seen to bind rRNA by itself. It is important during the early stages of 50S assembly. The sequence is that of Large ribosomal subunit protein uL13 from Borrelia hermsii (strain HS1 / DAH).